Here is a 673-residue protein sequence, read N- to C-terminus: FLYWCH-type zinc finger-containing protein 1 (673 aa).

The interval 1 to 62 (MPLPEPSEQD…SSTATLPNNT (62 aa)) is disordered. Position 21 is a phosphoserine (Ser-21). The span at 47–62 (VASQETSSTATLPNNT) shows a compositional bias: polar residues. FLYWCH-type zinc fingers lie at residues 92–150 (FLKT…DHCH) and 235–293 (FLKT…SHCH). Lys-110 participates in a covalent cross-link: Glycyl lysine isopeptide (Lys-Gly) (interchain with G-Cter in SUMO2). A compositionally biased stretch (basic and acidic residues) spans 147 to 158 (DHCHPPEKEGLD). The tract at residues 147–178 (DHCHPPEKEGLDRKKRHRGRPPSSALPEGAEV) is disordered. Phosphoserine occurs at positions 294 and 339. The tract at residues 351-402 (LSRSKSKSKSKSRSKSKSKSRSRSRKRAKKQQESSQEPPEEDQDVDPRGPEF) is disordered. A compositionally biased stretch (basic residues) spans 354-379 (SKSKSKSKSRSKSKSKSRSRSRKRAK). 3 consecutive FLYWCH-type zinc fingers follow at residues 402-460 (FLKT…SHCH), 490-548 (FLKT…RHCH), and 581-639 (FLRT…SHCH). A disordered region spans residues 646 to 673 (LEALRQREKAPSAAKKKKKKKKKKKGIH). Residues 659 to 673 (AKKKKKKKKKKKGIH) are compositionally biased toward basic residues. Lys-666 participates in a covalent cross-link: Glycyl lysine isopeptide (Lys-Gly) (interchain with G-Cter in SUMO2).

In terms of assembly, interacts with CTNNB1 (when unphosphorylated), perhaps preventing interaction of CTNNB1 with TCF4, and thereby regulating transcription activation; phosphorylation of CTNNB1 may inhibit the interaction.

It is found in the nucleus. The protein resides in the chromosome. It localises to the centromere. Functionally, transcription cofactor. Negatively regulates transcription activation by catenin beta-1 CTNNB1, perhaps acting by competing with TCF4 for CTNNB1 binding. May play a role in DNA-damage response signaling. Binds specifically to DNA sequences at peri-centromeric chromatin loci. The sequence is that of FLYWCH-type zinc finger-containing protein 1 (Flywch1) from Mus musculus (Mouse).